Here is a 226-residue protein sequence, read N- to C-terminus: MKKAVILISGGLDSTTCLAVAKSKGFSCYALSFDYGQKHHSELVAAEKIAAHFNVVRHEVVTLSIGKLGGSALTDNSLDVPDYGGNESIPITYVPARNTIFLSIALGWAEILDAESILIGASAIDYSGYPDCRPEYIAAFQNLANLATKRGIEGHSIKIEAPLIHLSKAETIKLGYSLGVDYSMTVSCYRANEEGLACGYCDSCELRKKGFKEAEIKDPTQYITKV.

Residue 8–18 participates in ATP binding; sequence ISGGLDSTTCL. Positions 188, 198, 201, and 204 each coordinate Zn(2+).

This sequence belongs to the QueC family. The cofactor is Zn(2+).

It catalyses the reaction 7-carboxy-7-deazaguanine + NH4(+) + ATP = 7-cyano-7-deazaguanine + ADP + phosphate + H2O + H(+). It participates in purine metabolism; 7-cyano-7-deazaguanine biosynthesis. Its function is as follows. Catalyzes the ATP-dependent conversion of 7-carboxy-7-deazaguanine (CDG) to 7-cyano-7-deazaguanine (preQ(0)). In Coxiella burnetii (strain RSA 331 / Henzerling II), this protein is 7-cyano-7-deazaguanine synthase.